The following is a 366-amino-acid chain: MSGNTLGTLFTVTTFGESHGPAIGCVIDGCPPGMSLAEADIQLELDRRKPGTSRHVTQRQEEDKVEILSGVFEGKTTGAPIALLIRNTDQRSKDYGNIADTFRPGHADYTYWQKFGIRDYRGGGRSSARLTAPTVAAGAVAKKWLREKFGTEIRGYMAALGEIDVPFIDWQFVRENPFFVPNADVVPQLEAYMDALRKDGDSIGARINVVASGVPVGLGEPLFDRLDADIAHAMMGINAVKGVEIGAGFASVAQRGSVHGDELTPEGFVGNHAGGVLGGISTGQDITVSIAIKPTSSIRTPRRSIDKNGQPAVVETFGRHDPCVGIRATPIAEAMLALVLIDHALRHRAQCGDVVVGTPKIAASAP.

NADP(+)-binding residues include arginine 48 and arginine 54. Residues arginine 125–serine 127, asparagine 238–alanine 239, glycine 278, lysine 293–serine 297, and arginine 319 contribute to the FMN site.

It belongs to the chorismate synthase family. In terms of assembly, homotetramer. FMNH2 serves as cofactor.

The catalysed reaction is 5-O-(1-carboxyvinyl)-3-phosphoshikimate = chorismate + phosphate. It functions in the pathway metabolic intermediate biosynthesis; chorismate biosynthesis; chorismate from D-erythrose 4-phosphate and phosphoenolpyruvate: step 7/7. Its function is as follows. Catalyzes the anti-1,4-elimination of the C-3 phosphate and the C-6 proR hydrogen from 5-enolpyruvylshikimate-3-phosphate (EPSP) to yield chorismate, which is the branch point compound that serves as the starting substrate for the three terminal pathways of aromatic amino acid biosynthesis. This reaction introduces a second double bond into the aromatic ring system. This Paraburkholderia phymatum (strain DSM 17167 / CIP 108236 / LMG 21445 / STM815) (Burkholderia phymatum) protein is Chorismate synthase.